The following is a 141-amino-acid chain: MSENVMTLQVITPAGVVYDHHANYITARTTNGEIGILPNMISTITGLEIDELKVSRPDDETHVDYIAVNGGIIEIKDSLVTIVADSAERNRDIDVSRAERAKIRAEKALEVAKAEKKSDEIKRVEVALHRALNRLNVSSHN.

It belongs to the ATPase epsilon chain family. F-type ATPases have 2 components, CF(1) - the catalytic core - and CF(0) - the membrane proton channel. CF(1) has five subunits: alpha(3), beta(3), gamma(1), delta(1), epsilon(1). CF(0) has three main subunits: a, b and c.

Its subcellular location is the cell membrane. In terms of biological role, produces ATP from ADP in the presence of a proton gradient across the membrane. The sequence is that of ATP synthase epsilon chain from Lactococcus lactis subsp. cremoris (strain MG1363).